The sequence spans 417 residues: Argininosuccinate synthase (417 aa).

8–16 (AYSGGLDTS) is an ATP binding site. Y87 is an L-citrulline binding site. ATP is bound at residue G117. L-aspartate-binding residues include T119, N123, and D124. An L-citrulline-binding site is contributed by N123. Residues R127, S175, E259, and Y271 each contribute to the L-citrulline site.

The protein belongs to the argininosuccinate synthase family. Type 1 subfamily. As to quaternary structure, homotetramer.

The protein resides in the cytoplasm. It catalyses the reaction L-citrulline + L-aspartate + ATP = 2-(N(omega)-L-arginino)succinate + AMP + diphosphate + H(+). It functions in the pathway amino-acid biosynthesis; L-arginine biosynthesis; L-arginine from L-ornithine and carbamoyl phosphate: step 2/3. The polypeptide is Argininosuccinate synthase (Clavibacter sepedonicus (Clavibacter michiganensis subsp. sepedonicus)).